Here is a 134-residue protein sequence, read N- to C-terminus: Methylglyoxal synthase (134 aa).

The 134-residue stretch at 1–134 (MKIALIAHDR…DWRLIQERRN (134 aa)) folds into the MGS-like domain. Substrate contacts are provided by residues His-8, Lys-12, 34–37 (TGTT), and 54–55 (SG). Catalysis depends on Asp-60, which acts as the Proton donor/acceptor. His-87 contributes to the substrate binding site.

It belongs to the methylglyoxal synthase family.

It carries out the reaction dihydroxyacetone phosphate = methylglyoxal + phosphate. Functionally, catalyzes the formation of methylglyoxal from dihydroxyacetone phosphate. The sequence is that of Methylglyoxal synthase from Lysinibacillus sphaericus (strain C3-41).